We begin with the raw amino-acid sequence, 199 residues long: MKQSHFFAHLSRLKLINRWPLMRNVRTENVSEHSLQVAMVAHALAAIKNRKFGGNVNAERIALLAMYHDASEVLTGDLPTPVKYFNSQIAQEYKAIEKIAQQKLVDMVPEELRDIFAPLIDEHAYSDEEKSLVKQADALCAYLKCLEELAAGNNEFLLAKTRLEATLAARRSQEMDYFMEVFVPSFHLSLDEISQDSPL.

Residues 18–19 (RW) and histidine 33 each bind substrate. Positions 30–142 (VSEHSLQVAM…VKQADALCAY (113 aa)) constitute an HD domain. Residues histidine 33, histidine 68, and aspartate 69 each coordinate a divalent metal cation. Substrate is bound by residues aspartate 69, 77 to 80 (DLPT), and aspartate 137. A divalent metal cation is bound at residue aspartate 137.

It belongs to the 5DNU family. In terms of assembly, homodimer. A divalent metal cation serves as cofactor.

It is found in the cytoplasm. It catalyses the reaction a 2'-deoxyribonucleoside 5'-phosphate + H2O = a 2'-deoxyribonucleoside + phosphate. Its function is as follows. Catalyzes the strictly specific dephosphorylation of 2'-deoxyribonucleoside 5'-monophosphates. The polypeptide is 5'-deoxynucleotidase YfbR (Shigella dysenteriae serotype 1 (strain Sd197)).